The primary structure comprises 207 residues: Large ribosomal subunit protein eL13 (207 aa).

It belongs to the eukaryotic ribosomal protein eL13 family. As to quaternary structure, component of the 60S large ribosomal subunit (LSU).

The protein localises to the cytoplasm. In terms of biological role, component of the ribosome, a large ribonucleoprotein complex responsible for the synthesis of proteins in the cell. The small ribosomal subunit (SSU) binds messenger RNAs (mRNAs) and translates the encoded message by selecting cognate aminoacyl-transfer RNA (tRNA) molecules. The large subunit (LSU) contains the ribosomal catalytic site termed the peptidyl transferase center (PTC), which catalyzes the formation of peptide bonds, thereby polymerizing the amino acids delivered by tRNAs into a polypeptide chain. The nascent polypeptides leave the ribosome through a tunnel in the LSU and interact with protein factors that function in enzymatic processing, targeting, and the membrane insertion of nascent chains at the exit of the ribosomal tunnel. As part of the LSU, it is probably required for its formation and the maturation of rRNAs. This Caenorhabditis elegans protein is Large ribosomal subunit protein eL13 (rpl-13).